A 98-amino-acid chain; its full sequence is Small ribosomal subunit protein bS6 (98 aa).

This sequence belongs to the bacterial ribosomal protein bS6 family.

In terms of biological role, binds together with bS18 to 16S ribosomal RNA. This chain is Small ribosomal subunit protein bS6, found in Staphylococcus aureus (strain NCTC 8325 / PS 47).